The sequence spans 86 residues: U15-lycotoxin-Ls1d (86 aa).

The signal sequence occupies residues 1–20 (MNSKIFAVLLLLGLLSCVLS). Residues 21–66 (DQYCPKSSITACKKMNIRNDCCKDDDCTGGSWCCATPCGNFCKYPT) form the WAP domain. Cystine bridges form between cysteine 24–cysteine 54, cysteine 32–cysteine 58, cysteine 41–cysteine 53, cysteine 42–cysteine 80, and cysteine 47–cysteine 62.

Belongs to the venom protein 11 family. 01 (wap-1) subfamily. Post-translationally, contains 5 disulfide bonds. Expressed by the venom gland.

Its subcellular location is the secreted. Its function is as follows. Has antibacterial activity. The polypeptide is U15-lycotoxin-Ls1d (Lycosa singoriensis (Wolf spider)).